The following is a 275-amino-acid chain: Autophagy-related protein 5 (275 aa).

Residue K129 forms a Glycyl lysine isopeptide (Lys-Gly) (interchain with G-Cter in lgg-3/ATG12) linkage. Residues 221–231 are compositionally biased toward low complexity; sequence LSSSSSSSTDS. The segment at 221–241 is disordered; the sequence is LSSSSSSSTDSQSEHPPRLIS.

This sequence belongs to the ATG5 family. In terms of assembly, most likely a component of a complex at least containing atg-5, lgg-3/ATG12, atg-16.1 and/or atg-16.2. Interacts with lgg-3/ATG12. Interacts with atg-16.1 (via N-terminus) and atg-16.2 (via N-terminus). Conjugated to lgg-3/ATG12; which is essential for autophagy.

The protein localises to the preautophagosomal structure membrane. Involved in autophagic vesicle formation. Conjugation with lgg-3/ATG12, through a ubiquitin-like conjugating system involving atg-7 as an E1-like activating enzyme and atg-10 as an E2-like conjugating enzyme, is essential for its function. Most likely a component of an atg-5-lgg-3-atg-16 complex that promotes autophagosome formation by associating with lgg-2, but not lgg-1, at the preautophagosomal membrane. Probably, as part of an atg-5-lgg-3-atg-16 complex, required for lgg-1 lipidation; the complex acts as an E3-like enzyme promoting atg-3-mediated lgg-1 lipidation. Furthermore, association with atg-16.2 is required for the nucleation of lgg-1 positive autophagic vesicles. The polypeptide is Autophagy-related protein 5 (Caenorhabditis elegans).